Reading from the N-terminus, the 250-residue chain is Lymphotoxin-beta (250 aa).

Residues 1-26 (MGAPGLETRAGGPNGKSYLLLASVGA) are Cytoplasmic-facing. A helical; Signal-anchor for type II membrane protein transmembrane segment spans residues 27–47 (AVLGTLLLSVPITVLTVLALM). Over 48–250 (PQEQGGQVAD…KTFFGAVMVG (203 aa)) the chain is Extracellular. One can recognise a THD domain in the interval 87–249 (PAAHLIGIAK…GKTFFGAVMV (163 aa)). An N-linked (GlcNAc...) asparagine glycan is attached at Asn-228.

This sequence belongs to the tumor necrosis factor family. As to quaternary structure, heterotrimer of either two LTB and one LTA subunits or (less prevalent) two LTA and one LTB subunits.

It localises to the membrane. In terms of biological role, cytokine that binds to LTBR/TNFRSF3. May play a specific role in immune response regulation. Provides the membrane anchor for the attachment of the heterotrimeric complex to the cell surface. In Notamacropus eugenii (Tammar wallaby), this protein is Lymphotoxin-beta (LTB).